We begin with the raw amino-acid sequence, 152 residues long: Ribonuclease H (152 aa).

One can recognise an RNase H type-1 domain in the interval 6 to 147; sequence KKNNVIAYTD…ADELANKAIA (142 aa). Asp15, Glu53, Asp75, and Asp139 together coordinate Mg(2+).

It belongs to the RNase H family. In terms of assembly, monomer. Requires Mg(2+) as cofactor.

The protein localises to the cytoplasm. It catalyses the reaction Endonucleolytic cleavage to 5'-phosphomonoester.. Functionally, endonuclease that specifically degrades the RNA of RNA-DNA hybrids. The protein is Ribonuclease H of Francisella philomiragia subsp. philomiragia (strain ATCC 25017 / CCUG 19701 / FSC 153 / O#319-036).